The following is a 244-amino-acid chain: 1-(5-phosphoribosyl)-5-[(5-phosphoribosylamino)methylideneamino] imidazole-4-carboxamide isomerase (244 aa).

The active-site Proton acceptor is the D8. The active-site Proton donor is the D131.

It belongs to the HisA/HisF family.

It is found in the cytoplasm. It catalyses the reaction 1-(5-phospho-beta-D-ribosyl)-5-[(5-phospho-beta-D-ribosylamino)methylideneamino]imidazole-4-carboxamide = 5-[(5-phospho-1-deoxy-D-ribulos-1-ylimino)methylamino]-1-(5-phospho-beta-D-ribosyl)imidazole-4-carboxamide. The protein operates within amino-acid biosynthesis; L-histidine biosynthesis; L-histidine from 5-phospho-alpha-D-ribose 1-diphosphate: step 4/9. The chain is 1-(5-phosphoribosyl)-5-[(5-phosphoribosylamino)methylideneamino] imidazole-4-carboxamide isomerase from Thermomicrobium roseum (strain ATCC 27502 / DSM 5159 / P-2).